Reading from the N-terminus, the 695-residue chain is Phosphate acetyltransferase (695 aa).

Residues 372-695 are phosphate acetyltransferase; the sequence is AFRYRLVKRA…LTAVQAASQR (324 aa).

It in the N-terminal section; belongs to the CobB/CobQ family. The protein in the C-terminal section; belongs to the phosphate acetyltransferase and butyryltransferase family. In terms of assembly, homohexamer.

It is found in the cytoplasm. The enzyme catalyses acetyl-CoA + phosphate = acetyl phosphate + CoA. Its pathway is metabolic intermediate biosynthesis; acetyl-CoA biosynthesis; acetyl-CoA from acetate: step 2/2. Its function is as follows. Involved in acetate metabolism. The protein is Phosphate acetyltransferase (pta) of Nitrosomonas europaea (strain ATCC 19718 / CIP 103999 / KCTC 2705 / NBRC 14298).